The chain runs to 218 residues: Protein-L-isoaspartate O-methyltransferase (218 aa).

Residue Ser66 is part of the active site.

It belongs to the methyltransferase superfamily. L-isoaspartyl/D-aspartyl protein methyltransferase family.

The protein localises to the cytoplasm. The catalysed reaction is [protein]-L-isoaspartate + S-adenosyl-L-methionine = [protein]-L-isoaspartate alpha-methyl ester + S-adenosyl-L-homocysteine. In terms of biological role, catalyzes the methyl esterification of L-isoaspartyl residues in peptides and proteins that result from spontaneous decomposition of normal L-aspartyl and L-asparaginyl residues. It plays a role in the repair and/or degradation of damaged proteins. The polypeptide is Protein-L-isoaspartate O-methyltransferase (Caulobacter sp. (strain K31)).